The primary structure comprises 330 residues: MSKAPVRVAVTGAAGQIGYSLLFRIASGEMLGKDQPVILQLLDLPQAQKAVKGVMMELEDCAFPLLAGMIATDDPNVAFKDAKVALLVGARPRGPGMERKDLLTENAKIFTVQGAAIGQYADPDCKVLVVGNPCNTNAYIAKEVAQKYGRVPAKNFTGMLRLDHNRALSQLAGKSGREVSSLKNLVVWGNHSPTMYADYRFVKSNGDSVKDLINDAAWNKDVFLPTVGKRGAAIIEARGLSSAASAANAAIDHIRDWVLGSNGEWVTMGIPSDGSYGIPEGVIYGFPVTTENGEYKIVQGLEIDEFSRERMTVTLNELLEEREGVKDLLA.

12-18 (GAAGQIG) contributes to the NAD(+) binding site. R93 and R99 together coordinate substrate. Residues N106, Q113, and 130 to 132 (VGN) each bind NAD(+). Residues N132 and R166 each contribute to the substrate site. H191 (proton acceptor) is an active-site residue.

It belongs to the LDH/MDH superfamily. MDH type 2 family.

The enzyme catalyses (S)-malate + NAD(+) = oxaloacetate + NADH + H(+). In terms of biological role, catalyzes the reversible oxidation of malate to oxaloacetate. This Azoarcus sp. (strain BH72) protein is Malate dehydrogenase.